Reading from the N-terminus, the 127-residue chain is Small ribosomal subunit protein uS11 (127 aa).

This sequence belongs to the universal ribosomal protein uS11 family. Part of the 30S ribosomal subunit. Interacts with proteins S7 and S18. Binds to IF-3.

Located on the platform of the 30S subunit, it bridges several disparate RNA helices of the 16S rRNA. Forms part of the Shine-Dalgarno cleft in the 70S ribosome. The chain is Small ribosomal subunit protein uS11 from Rhodopirellula baltica (strain DSM 10527 / NCIMB 13988 / SH1).